The sequence spans 343 residues: Anthranilate phosphoribosyltransferase (343 aa).

5-phospho-alpha-D-ribose 1-diphosphate contacts are provided by residues G86, 89-90 (GD), T94, 96-99 (NIST), 114-122 (KHGNKSASG), and S126. G86 provides a ligand contact to anthranilate. S98 serves as a coordination point for Mg(2+). An anthranilate-binding site is contributed by N117. R172 is an anthranilate binding site. Mg(2+) contacts are provided by D231 and E232.

This sequence belongs to the anthranilate phosphoribosyltransferase family. Homodimer. Mg(2+) is required as a cofactor.

It catalyses the reaction N-(5-phospho-beta-D-ribosyl)anthranilate + diphosphate = 5-phospho-alpha-D-ribose 1-diphosphate + anthranilate. Its pathway is amino-acid biosynthesis; L-tryptophan biosynthesis; L-tryptophan from chorismate: step 2/5. Functionally, catalyzes the transfer of the phosphoribosyl group of 5-phosphorylribose-1-pyrophosphate (PRPP) to anthranilate to yield N-(5'-phosphoribosyl)-anthranilate (PRA). This is Anthranilate phosphoribosyltransferase from Prochlorococcus marinus subsp. pastoris (strain CCMP1986 / NIES-2087 / MED4).